The chain runs to 28 residues: Morintide mO6 (28 aa).

The Chitin-binding type-1 domain maps to 1-28; it reads NGLCCSQYGFCGTTSAYCSRANGCQSNC. 2 disulfides stabilise this stretch: C4–C18 and C24–C28.

In terms of tissue distribution, seeds (at protein level).

Chitin-binding protein which functions in defense against chitin-containing fungal pathogens. The chain is Morintide mO6 from Moringa oleifera (Horseradish tree).